We begin with the raw amino-acid sequence, 602 residues long: RNA-binding NOB1-like protein (602 aa).

A disordered region spans residues 1 to 25; that stretch reads MDPKPTSMWSSIVKKDPPSKPPVND. Residues 48–134 form the PINc domain; it reads VVDANAIIEG…LKLIALSYTL (87 aa). Disordered stretches follow at residues 258-278 and 301-331; these read SQGQ…VSRS and IQKD…GEDI. The segment covering 301–329 has biased composition (basic and acidic residues); the sequence is IQKDQEADKARHTKEANETHAKDSGKNGE. Positions 331 to 365 form a coiled coil; that stretch reads ISSILKDMRLEEESLRALQEETEETNAEATLINGE. An NOB1 zinc finger spans residues 452-522; that stretch reads IRQLHRWILK…QYSIPMPKGG (71 aa). Residues cysteine 462, cysteine 465, cysteine 477, and cysteine 480 each coordinate Zn(2+).

Belongs to the NOB1 family. As to quaternary structure, component of the small ribosomal subunit, ribosomal RNA processing complex (SSU RRP complex). In terms of tissue distribution, highly expressed in flowers and siliques and at lower levels in roots, hypocotyls, stems, leaves and seeds.

It is found in the nucleus. It localises to the nucleoplasm. The protein localises to the cytoplasm. Functionally, essential protein required during embryogenesis and pollen development. Endonuclease cleaving pre-rRNA at the 3' end of the mature 18S rRNA (D-site); cleaves 20S pre-rRNA in the cytoplasm. Required for processing of 20S pre-rRNA precursor and biogenesis of 40S ribosomal subunits. The polypeptide is RNA-binding NOB1-like protein (Arabidopsis thaliana (Mouse-ear cress)).